The chain runs to 228 residues: Small ribosomal subunit protein uS3 (228 aa).

A KH type-2 domain is found at isoleucine 39 to lysine 107.

It belongs to the universal ribosomal protein uS3 family. As to quaternary structure, part of the 30S ribosomal subunit. Forms a tight complex with proteins S10 and S14.

Binds the lower part of the 30S subunit head. Binds mRNA in the 70S ribosome, positioning it for translation. The polypeptide is Small ribosomal subunit protein uS3 (Hydrogenovibrio crunogenus (strain DSM 25203 / XCL-2) (Thiomicrospira crunogena)).